The sequence spans 296 residues: Nucleotide-binding protein MGAS2096_Spy0550 (296 aa).

13 to 20 (GMSGAGKT) is a binding site for ATP. GTP is bound at residue 63 to 66 (DMRS).

This sequence belongs to the RapZ-like family.

Displays ATPase and GTPase activities. The chain is Nucleotide-binding protein MGAS2096_Spy0550 from Streptococcus pyogenes serotype M12 (strain MGAS2096).